The following is a 258-amino-acid chain: MKIAILYREEREKEGKFLKEKISKEHEVIEFGKANAPGRVTADLIVVVGGDGTVLKAAKKAADGTPMVGFKAGRLGFLTSYTLDEIDRFLEDLRNWNFREETRWFIQIESELGNHLALNDVTLERDLSGKMVEIEVEVEHHSSMWFFADGVVISTPTGSTAYSLSIGGPIIFPECEVLEISPIAPQFFLTRSVVIPSNFKVVVESQRDINMLVDGVLTGKTKRIEVKKSRRYVRILRPPEYDYVTVIRDKLGYGRRIE.

D51 functions as the Proton acceptor in the catalytic mechanism. NAD(+)-binding positions include 51-52 (DG), K56, 119-120 (ND), K130, D149, 160-165 (TAYSLS), and A184.

The protein belongs to the NAD kinase family. A divalent metal cation is required as a cofactor.

It is found in the cytoplasm. It carries out the reaction NAD(+) + ATP = ADP + NADP(+) + H(+). Functionally, involved in the regulation of the intracellular balance of NAD and NADP, and is a key enzyme in the biosynthesis of NADP. Catalyzes specifically the phosphorylation on 2'-hydroxyl of the adenosine moiety of NAD to yield NADP. This chain is NAD kinase, found in Thermotoga sp. (strain RQ2).